Reading from the N-terminus, the 366-residue chain is NADH-quinone oxidoreductase subunit D (366 aa).

It belongs to the complex I 49 kDa subunit family. As to quaternary structure, NDH-1 is composed of 14 different subunits. Subunits NuoB, C, D, E, F, and G constitute the peripheral sector of the complex.

The protein resides in the cell membrane. The enzyme catalyses a quinone + NADH + 5 H(+)(in) = a quinol + NAD(+) + 4 H(+)(out). In terms of biological role, NDH-1 shuttles electrons from NADH, via FMN and iron-sulfur (Fe-S) centers, to quinones in the respiratory chain. The immediate electron acceptor for the enzyme in this species is believed to be a menaquinone. Couples the redox reaction to proton translocation (for every two electrons transferred, four hydrogen ions are translocated across the cytoplasmic membrane), and thus conserves the redox energy in a proton gradient. The chain is NADH-quinone oxidoreductase subunit D from Bacillus cereus (strain ATCC 10987 / NRS 248).